Here is a 154-residue protein sequence, read N- to C-terminus: Immunity protein YwqK (154 aa).

As to quaternary structure, probably interacts with cognate toxin YwqJ but not with other non-cognate LXG toxins. The interaction inhibits the toxic activity of YwqJ.

It is found in the cytoplasm. Its function is as follows. Immunity component of one of 6 LXG toxin-immunity modules in this strain. They promote kin selection, mediate competition in biofilms, and drive spatial segregation of different strains, indicating that LXG toxins may help avoid warfare between strains in biofilms. Mediates intercellular competition during biofilm formation; disruption of the operon disadvantages the bacteria, but overexpression of the cognate immunity protein restores growth in competition with wild-type. In situ neutralizes the toxic effect of cognate toxin YqcG. Probably neutralizes the ability to inhibit growth of cognate toxin YwqJ. Probably does not have immunity protein activity on other LXG toxins. The polypeptide is Immunity protein YwqK (ywqK) (Bacillus subtilis (strain 168)).